We begin with the raw amino-acid sequence, 616 residues long: MHFDDLPVLPASPGVYIFRRGGTPIYIGKAVNLRSRVAQHFKAGGKSGKFTALADSLDFITTRNEVEALILEANLIKQHRPHYNVLLKDDKHYPFLKLTNEAFPMLVVTRRVLKDGASYYGPYPDASAVRRVKHLIDTMFPLRKNSGLPMQKKPRPCLNYHMGRCLGPCVDAADPQAYAQVVEDVKALLEGRAAPVIARLKADMQAAARAQDFEQAARLRDRVQAVEKLFGTEQHAYVSEETDLDFLGVAQAGEYAMVQLFRLRGGRVVGRDKRFLVGAEGGADVGEVLGAFVQDYYTQATHVPPLILLPAEFEDAPVWSAFLSERAGRRVEMRTPKRGDKAELVEMAQRNAAAGLESELALLERRGDHPGLDALREVLALPDRPWRIEGYDNSNLFGSNIVSGMVVFEGGRARRSEHRRFKVRGLDHPDDYAAMHQTITRRLTGSLADKLPLPDLILIDGGRGQVHAALDALRAADVRVPLVGLAKREERIILPGRFGAQWWLETGTEVGVGGELLLPHTHPALRVLIGVRDEVHHYAVSYHRTLRGEQMLRSVFDDLPGIGQKRRDALLEHFTSLEDLAAAPVERIAAVPGMNLRAAQSVKKFLAERTANGTPT.

The region spanning 11 to 85 (ASPGVYIFRR…IKQHRPHYNV (75 aa)) is the GIY-YIG domain. The UVR domain occupies 194–229 (APVIARLKADMQAAARAQDFEQAARLRDRVQAVEKL).

It belongs to the UvrC family. Interacts with UvrB in an incision complex.

It localises to the cytoplasm. Its function is as follows. The UvrABC repair system catalyzes the recognition and processing of DNA lesions. UvrC both incises the 5' and 3' sides of the lesion. The N-terminal half is responsible for the 3' incision and the C-terminal half is responsible for the 5' incision. The protein is UvrABC system protein C of Deinococcus geothermalis (strain DSM 11300 / CIP 105573 / AG-3a).